A 620-amino-acid chain; its full sequence is Siderophore iron transporter ARN2 (620 aa).

The interval 1–42 is disordered; the sequence is MIEVPEDNRSSQTKRKNTEKNCNELMVDEKMDDDSSPRDEMK. Residues 16 to 42 show a composition bias toward basic and acidic residues; the sequence is KNTEKNCNELMVDEKMDDDSSPRDEMK. A run of 14 helical transmembrane segments spans residues 71–93, 106–128, 135–152, 162–184, 191–213, 223–245, 286–308, 318–335, 355–377, 392–414, 421–438, 448–470, 491–513, and 561–578; these read IFLFSAFICTFAYGLDSSIRGTY, LISTVSVIVLMISAVSQVIFGGL, LTLFLVSIVLYIVGTIIQ, AAGAVFYYVGLVGVMLQVVLMLS, WRLFYTLIPSWPSIITTWVSGSV, WSWNIAMWAFIFPLCCIPLILCM, VVGVLLFTAGVGCILVPLTLAGG, IIGPFVLGFVLVPGFIYW, VWAPLGIMFFICFVYQMAAGYLY, TRIINLYSFVTAVVAPFLGLIVT, SYIIFGGSLYFITMGLFY, GGIIAGMVIWGLSSCLFDYPTIV, VFRIGGAVAAAISGAIWTQSLYP, and VIVALVFSAPMFLLTFCV.

Belongs to the major facilitator superfamily.

The protein resides in the endosome membrane. In terms of biological role, involved in the transport of siderophore triacestylfusarinine C and so has a role in iron homeostasis. This Saccharomyces cerevisiae (strain ATCC 204508 / S288c) (Baker's yeast) protein is Siderophore iron transporter ARN2 (ARN2).